A 365-amino-acid polypeptide reads, in one-letter code: tRNA 2-selenouridine synthase (365 aa).

In terms of domain architecture, Rhodanese spans 15–138 (LVNDHPIMDA…MRQFLIETID (124 aa)). Cys-98 acts as the S-selanylcysteine intermediate in catalysis.

It belongs to the SelU family. Monomer.

It carries out the reaction 5-methylaminomethyl-2-thiouridine(34) in tRNA + selenophosphate + (2E)-geranyl diphosphate + H2O + H(+) = 5-methylaminomethyl-2-selenouridine(34) in tRNA + (2E)-thiogeraniol + phosphate + diphosphate. The catalysed reaction is 5-methylaminomethyl-2-thiouridine(34) in tRNA + (2E)-geranyl diphosphate = 5-methylaminomethyl-S-(2E)-geranyl-thiouridine(34) in tRNA + diphosphate. It catalyses the reaction 5-methylaminomethyl-S-(2E)-geranyl-thiouridine(34) in tRNA + selenophosphate + H(+) = 5-methylaminomethyl-2-(Se-phospho)selenouridine(34) in tRNA + (2E)-thiogeraniol. The enzyme catalyses 5-methylaminomethyl-2-(Se-phospho)selenouridine(34) in tRNA + H2O = 5-methylaminomethyl-2-selenouridine(34) in tRNA + phosphate. Functionally, involved in the post-transcriptional modification of the uridine at the wobble position (U34) of tRNA(Lys), tRNA(Glu) and tRNA(Gln). Catalyzes the conversion of 2-thiouridine (S2U-RNA) to 2-selenouridine (Se2U-RNA). Acts in a two-step process involving geranylation of 2-thiouridine (S2U) to S-geranyl-2-thiouridine (geS2U) and subsequent selenation of the latter derivative to 2-selenouridine (Se2U) in the tRNA chain. This Shewanella pealeana (strain ATCC 700345 / ANG-SQ1) protein is tRNA 2-selenouridine synthase.